The primary structure comprises 239 residues: Ribosomal RNA small subunit methyltransferase G (239 aa).

S-adenosyl-L-methionine contacts are provided by residues Gly79, Phe84, 130–131 (AE), and Arg149.

The protein belongs to the methyltransferase superfamily. RNA methyltransferase RsmG family.

The protein localises to the cytoplasm. Specifically methylates the N7 position of a guanine in 16S rRNA. The protein is Ribosomal RNA small subunit methyltransferase G of Lactobacillus delbrueckii subsp. bulgaricus (strain ATCC 11842 / DSM 20081 / BCRC 10696 / JCM 1002 / NBRC 13953 / NCIMB 11778 / NCTC 12712 / WDCM 00102 / Lb 14).